A 244-amino-acid polypeptide reads, in one-letter code: tRNA (guanine-N(1)-)-methyltransferase (244 aa).

S-adenosyl-L-methionine-binding positions include glycine 120 and 140-145; that span reads IGDYIL.

Belongs to the RNA methyltransferase TrmD family. In terms of assembly, homodimer.

It localises to the cytoplasm. The enzyme catalyses guanosine(37) in tRNA + S-adenosyl-L-methionine = N(1)-methylguanosine(37) in tRNA + S-adenosyl-L-homocysteine + H(+). Its function is as follows. Specifically methylates guanosine-37 in various tRNAs. The chain is tRNA (guanine-N(1)-)-methyltransferase from Brucella canis (strain ATCC 23365 / NCTC 10854 / RM-666).